Consider the following 379-residue polypeptide: Cell cycle checkpoint control protein RAD9A (379 aa).

Tyr17 is subject to Phosphotyrosine. Residues 40–80 (FLFAPLFFQQYQAATPGQDLLRCKILMKSFLSVFRSLAMLE) form a possesses 3'-5' exonuclease activity region. The segment at 255–379 (SDTDSHSQDL…VLAEDSEGEG (125 aa)) is sufficient for interaction with ABL1. Basic and acidic residues predominate over residues 257–271 (TDSHSQDLGSPERHQ). Disordered regions lie at residues 257 to 289 (TDSHSQDLGSPERHQPVPQLQAHSIPHPDDFAN) and 308 to 379 (SRVL…EGEG). 7 positions are modified to phosphoserine: Ser261, Ser266, Ser317, Ser330, Ser363, Ser368, and Ser375.

It belongs to the rad9 family. As to quaternary structure, component of the toroidal 9-1-1 (RAD9-RAD1-HUS1) complex, composed of RAD9A, RAD1 and HUS1. The 9-1-1 complex associates with LIG1, POLB, FEN1, RAD17, HDAC1, RPA1 and RPA2. The 9-1-1 complex associates with the RAD17-RFC complex. RAD9A interacts with BCL2L1, FEN1, RAD9B, ABL1, RPA1, ATAD5 and RPA2. Interacts with DNAJC7. Interacts (when phosphorylated) with TOPBP1. Constitutively phosphorylated on serine and threonine amino acids in absence of DNA damage. Hyperphosphorylated by PRKCD and ABL1 upon DNA damage. Its phosphorylation by PRKCD may be required for the formation of the 9-1-1 complex. Phosphorylated at Ser-330 and Ser-375 by CK2, promoting interaction with TOPBP1.

The protein resides in the nucleus. It catalyses the reaction Exonucleolytic cleavage in the 3'- to 5'-direction to yield nucleoside 5'-phosphates.. Functionally, component of the 9-1-1 cell-cycle checkpoint response complex that plays a major role in DNA repair. The 9-1-1 complex is recruited to DNA lesion upon damage by the RAD17-replication factor C (RFC) clamp loader complex. Acts then as a sliding clamp platform on DNA for several proteins involved in long-patch base excision repair (LP-BER). The 9-1-1 complex stimulates DNA polymerase beta (POLB) activity by increasing its affinity for the 3'-OH end of the primer-template and stabilizes POLB to those sites where LP-BER proceeds; endonuclease FEN1 cleavage activity on substrates with double, nick, or gap flaps of distinct sequences and lengths; and DNA ligase I (LIG1) on long-patch base excision repair substrates. The 9-1-1 complex is necessary for the recruitment of RHNO1 to sites of double-stranded breaks (DSB) occurring during the S phase. RAD9A possesses 3'-&gt;5' double stranded DNA exonuclease activity. The polypeptide is Cell cycle checkpoint control protein RAD9A (RAD9A) (Macaca fascicularis (Crab-eating macaque)).